Consider the following 591-residue polypeptide: Parathyroid hormone/parathyroid hormone-related peptide receptor (591 aa).

Residues 1 to 26 (MGTARIAPSLALLLCCPVLSSAYALV) form the signal peptide. Topologically, residues 27–188 (DADDVFTKEE…REREVFDRLG (162 aa)) are extracellular. Disulfide bonds link Cys48-Cys117, Cys108-Cys148, and Cys131-Cys170. Positions 67-104 (KGWTPASTSGKPRKEKAPGKFYPESKENKDVPTGSRRR) are disordered. Residues 81–96 (EKAPGKFYPESKENKD) show a composition bias toward basic and acidic residues. N-linked (GlcNAc...) asparagine glycosylation is found at Asn151, Asn161, Asn166, and Asn176. A helical transmembrane segment spans residues 189-212 (MIYTVGYSMSLASLTVAVLILAYF). At 213–219 (RRLHCTR) the chain is on the cytoplasmic side. The helical transmembrane segment at 220–239 (NYIHMHMFLSFMLRAASIFV) threads the bilayer. Residues 240-282 (KDAVLYSGFTLDEAERLTEEELHIIAQVPPPPAAAAVGYAGCR) are Extracellular-facing. Residues 283–306 (VAVTFFLYFLATNYYWILVEGLYL) traverse the membrane as a helical segment. At 307–320 (HSLIFMAFFSEKKY) the chain is on the cytoplasmic side. A helical transmembrane segment spans residues 321-342 (LWGFTIFGWGLPAVFVAVWVGV). At 343–361 (RATLANTGCWDLSSGHKKW) the chain is on the extracellular side. A helical membrane pass occupies residues 362-382 (IIQVPILASVVLNFILFINII). Residues 383–409 (RVLATKLRETNAGRCDTRQQYRKLLRS) are Cytoplasmic-facing. Residues 410–428 (TLVLVPLFGVHYTVFMALP) traverse the membrane as a helical segment. At 429–440 (YTEVSGTLWQIQ) the chain is on the extracellular side. A helical transmembrane segment spans residues 441–463 (MHYEMLFNSFQGFFVAIIYCFCN). Residues 464-591 (GEVQAEIRKS…LLQEEWETVM (128 aa)) are Cytoplasmic-facing. The short motif at 474-477 (WSRW) is the Important for interaction with G proteins element.

Belongs to the G-protein coupled receptor 2 family. As to quaternary structure, homodimer in the absence of bound ligand. Peptide hormone binding leads to dissociation of the homodimer. In terms of processing, N-glycosylated. Detected in kidney.

It is found in the cell membrane. Functionally, G-protein-coupled receptor for parathyroid hormone (PTH) and for parathyroid hormone-related peptide (PTHLH). Ligand binding causes a conformation change that triggers signaling via guanine nucleotide-binding proteins (G proteins) and modulates the activity of downstream effectors, such as adenylate cyclase (cAMP). PTH1R is coupled to G(s) G alpha proteins and mediates activation of adenylate cyclase activity. PTHLH dissociates from PTH1R more rapidly than PTH; as consequence, the cAMP response induced by PTHLH decays faster than the response induced by PTH. This Mus musculus (Mouse) protein is Parathyroid hormone/parathyroid hormone-related peptide receptor (Pth1r).